The chain runs to 388 residues: Processive diacylglycerol beta-glucosyltransferase (388 aa).

This sequence belongs to the glycosyltransferase 28 family. UgtP subfamily.

It localises to the cell membrane. It catalyses the reaction a 1,2-diacyl-3-O-(beta-D-glucopyranosyl)-sn-glycerol + UDP-alpha-D-glucose = a 1,2-diacyl-3-O-(beta-D-Glc-(1-&gt;6)-beta-D-Glc)-sn-glycerol + UDP + H(+). The enzyme catalyses a 1,2-diacyl-3-O-(beta-D-Glc-(1-&gt;6)-beta-D-Glc)-sn-glycerol + UDP-alpha-D-glucose = a 1,2-diacyl-3-O-(beta-D-Glc-(1-&gt;6)-beta-D-Glc-(1-&gt;6)-beta-D-Glc)-sn-glycerol + UDP + H(+). The catalysed reaction is a 1,2-diacyl-sn-glycerol + UDP-alpha-D-glucose = a 1,2-diacyl-3-O-(beta-D-glucopyranosyl)-sn-glycerol + UDP + H(+). The protein operates within glycolipid metabolism; diglucosyl-diacylglycerol biosynthesis. Functionally, processive glucosyltransferase involved in the biosynthesis of both the bilayer- and non-bilayer-forming membrane glucolipids. Is able to successively transfer up to three glucosyl residues to diacylglycerol (DAG), thereby catalyzing the formation of beta-monoglucosyl-DAG (3-O-(beta-D-glucopyranosyl)-1,2-diacyl-sn-glycerol), beta-diglucosyl-DAG (3-O-(beta-D-glucopyranosyl-beta-(1-&gt;6)-D-glucopyranosyl)-1,2-diacyl-sn-glycerol) and beta-triglucosyl-DAG (3-O-(beta-D-glucopyranosyl-beta-(1-&gt;6)-D-glucopyranosyl-beta-(1-&gt;6)-D-glucopyranosyl)-1,2-diacyl-sn-glycerol). Beta-diglucosyl-DAG is the predominant glycolipid found in Bacillales and is also used as a membrane anchor for lipoteichoic acid (LTA). In Bacillus cereus (strain ATCC 10987 / NRS 248), this protein is Processive diacylglycerol beta-glucosyltransferase.